The primary structure comprises 68 residues: MKTQFAILLVALVLFQMFAQSDAILGKIWEGIKSLFGKRGLSDLDGLDELFDGEISKADRDFLRELMR.

A signal peptide spans 1-23; sequence MKTQFAILLVALVLFQMFAQSDA. A Phenylalanine amide modification is found at Phe-36. Positions 40 to 68 are excised as a propeptide; the sequence is GLSDLDGLDELFDGEISKADRDFLRELMR.

This sequence belongs to the non-disulfide-bridged peptide (NDBP) superfamily. Short antimicrobial peptide (group 4) family. Post-translationally, isCTf is an enzymatic proteolytic cleavage product of IsCT by the proteases present in the venom. In terms of tissue distribution, expressed by the venom gland.

It is found in the secreted. The protein localises to the target cell membrane. Shows weak hemolytic activity and antibacterial activity against both Gram-positive and Gram-negative bacteria probably by forming pores in the cell membrane. IsCT adopts an amphipathic alpha-helical structure. Functionally, shows neither hemolytic, nor antibacterial activities, probably because it cannot adopt amphipathic alpha-helical structure. This chain is Cytotoxic linear peptide IsCT, found in Opisthacanthus madagascariensis (Scorpion).